Here is a 126-residue protein sequence, read N- to C-terminus: Large ribosomal subunit protein uL22 (126 aa).

Belongs to the universal ribosomal protein uL22 family. Part of the 50S ribosomal subunit.

Its function is as follows. This protein binds specifically to 23S rRNA; its binding is stimulated by other ribosomal proteins, e.g. L4, L17, and L20. It is important during the early stages of 50S assembly. It makes multiple contacts with different domains of the 23S rRNA in the assembled 50S subunit and ribosome. The globular domain of the protein is located near the polypeptide exit tunnel on the outside of the subunit, while an extended beta-hairpin is found that lines the wall of the exit tunnel in the center of the 70S ribosome. The chain is Large ribosomal subunit protein uL22 from Caulobacter vibrioides (strain ATCC 19089 / CIP 103742 / CB 15) (Caulobacter crescentus).